The chain runs to 454 residues: Anthocyanidin 3-O-galactosyltransferase 3GT6 (454 aa).

An N-terminal signal peptide occupies residues 1-21 (MTNSSKGRHVAVLPFPFSTHA). Ser18 and His20 together coordinate an anthocyanidin. His20 acts as the Proton acceptor in catalysis. The Charge relay role is filled by Asp117. His148 lines the an anthocyanidin pocket. UDP-alpha-D-glucose contacts are provided by Ala331, Gln333, His348, Trp351, Asn352, Ser353, and Glu356. An an anthocyanidin-binding site is contributed by Gly371. Asp372 is a binding site for UDP-alpha-D-glucose. Asn441 carries an N-linked (GlcNAc...) asparagine glycan.

The protein belongs to the UDP-glycosyltransferase family. Monomer. In terms of tissue distribution, mostly expressed in leaves and flowers and, to a lower extent, in roots. In flowers, mainly observed in petals, stamens and scapes, and at lower levels in pistils and toruses.

The enzyme catalyses cyanidin + UDP-alpha-D-galactose = cyanidin 3-O-beta-D-galactoside + UDP + H(+). The catalysed reaction is cyanidin + UDP-alpha-D-glucose = cyanidin 3-O-beta-D-glucoside + UDP + H(+). It catalyses the reaction delphinidin + UDP-alpha-D-glucose = delphinidin 3-O-beta-D-glucoside + UDP. It carries out the reaction peonidin + UDP-alpha-D-glucose = peonidin 3-O-beta-D-glucoside + UDP. The enzyme catalyses pelargonidin + UDP-alpha-D-glucose = pelargonidin 3-O-beta-D-glucoside + UDP. The catalysed reaction is delphinidin + UDP-alpha-D-galactose = delphinidin 3-O-beta-D-galactoside + UDP + H(+). It catalyses the reaction pelargonidin + UDP-alpha-D-galactose = pelargonidin 3-O-beta-D-galactoside betaine + UDP. It carries out the reaction peonidin + UDP-alpha-D-galactose = peonidin 3-O-beta-D-galactoside + UDP. The enzyme catalyses petunidin + UDP-alpha-D-galactose = petunidin 3-O-beta-D-galactoside + UDP. The catalysed reaction is petunidin + UDP-alpha-D-glucose = petunidin 3-O-beta-D-glucoside + UDP. It catalyses the reaction an anthocyanidin + UDP-alpha-D-glucose + H(+) = an anthocyanidin 3-O-beta-D-glucoside + UDP. It carries out the reaction an anthocyanidin + UDP-alpha-D-galactose = an anthocyanidin 3-O-beta-D-galactoside + UDP. The protein operates within pigment biosynthesis; anthocyanin biosynthesis. Its function is as follows. Flavonoid 3-O-glycosyltransferase involved in the biosynthesis of anthocyanins conferring flower red/pink colors, mainly anthocyanidin 3-O-glycosides. Catalyzes the addition of UDP-sugar to the 3-OH of anthocyanidin, with a preference for UDP-galactose (UDP-Gal) as sugar donor and cyanidin as substrate; able to use delphinidin, pelargonidin, peonidin and petunidin as substrates in the presence of UDP-Gal, but barely active on malvidin. Can also use UDP-glucose (UDP-Glu) as sugar donor with cyanidin, delphinidin, pelargonidin, peonidin and petunidin as substrates, but not active on malvidin. The chain is Anthocyanidin 3-O-galactosyltransferase 3GT6 from Rhododendron delavayi (Rhododendron).